Here is a 115-residue protein sequence, read N- to C-terminus: Phosphoribosyl-AMP cyclohydrolase (115 aa).

Asp80 lines the Mg(2+) pocket. Cys81 lines the Zn(2+) pocket. Positions 82 and 84 each coordinate Mg(2+). 2 residues coordinate Zn(2+): Cys97 and Cys104.

It belongs to the PRA-CH family. As to quaternary structure, homodimer. Mg(2+) is required as a cofactor. The cofactor is Zn(2+).

It localises to the cytoplasm. The enzyme catalyses 1-(5-phospho-beta-D-ribosyl)-5'-AMP + H2O = 1-(5-phospho-beta-D-ribosyl)-5-[(5-phospho-beta-D-ribosylamino)methylideneamino]imidazole-4-carboxamide. It functions in the pathway amino-acid biosynthesis; L-histidine biosynthesis; L-histidine from 5-phospho-alpha-D-ribose 1-diphosphate: step 3/9. Functionally, catalyzes the hydrolysis of the adenine ring of phosphoribosyl-AMP. The polypeptide is Phosphoribosyl-AMP cyclohydrolase (Mycolicibacterium paratuberculosis (strain ATCC BAA-968 / K-10) (Mycobacterium paratuberculosis)).